We begin with the raw amino-acid sequence, 1097 residues long: MSSAIQVAKTATYLPDLVEVQRGSFKWFLEKGLIEELESFSPITDYTGKLELHFVGSEYRLKRPRHDVEEAKRRDATFASQMYVTCRLVNKETGEIKEQEVFIGELPLMTERGTFIINGAERVIVNQIVRSPGVYFKDEQDKNGRRTYNASLIPNRGAWLKFETDKNDLLHVRVDKTRKINAHVMMRAIGLSDNDVLDKLRHPEYYKKSIDAANEEGISSEDQALLELYKKLRPGEPPSVSGGQQLLHSRFFDPKRYDLGRVGRYKMNKKLRLTIPDAVRTLTPEDVLSTLDYLINLELDVGGACLDDIDHLGNRRVRSVGELLQNQVRVGLNRLERIIKERMTVGETDSLTPAQLVNPKPLVAAIKEFFGSSQLSQFMDQTNPLAELTHKRRISALGPGVLTRERAGFAVRDIHPSHYGRICPIETPEGPNAGLIGSLATHARVNEYGFIETPFWKVTDGVVDKSGDPIYLSADLEDECRVAPGDVATDADGRITAELIPVRYRLDFETVPPNQVDYVQLSPVQVISVAASLIPFLEHDDANRALMGSNMQRQAVPLLRPERPLVGTGLETQVARDSGMVPITRVNGEVVFVDSTQIIVRDDQGVDHYHLLQKYQRSNQDTCLNQRPIVQQGDQVIAGQVLANGSACEGGEIALGQNCLIAYMPWEGYNYEDAILVSERLVRDDLYTSVHIEKYEIEARQTKLGPEEITREIPNVAEESLGNLDEMGIIRIGAFVESGDILVGKVTPKGESDQPPEEKLLRAIFGEKARDVRDNSLRVPNTERGRVVDVRIYTREQGDELPPGANMVVRVYVAQRRKIQVGDKMAGRHGNKGIISRILPLEDMPYLPDGTPIDIVLNPLGVPSRMNVGQVFECALMGWAADNLDSRFKIVPFDEMHGAEKSRETVEGYLKEAAKQPGREWVYDPENPGKIQLIDGRSGEPFDQPVTVGRAYILKLVHLVDDKIHARSTGPYSLVTQQPLGGKAQQGGQRLGEMEVWALEAYGAAYTLQELLTVKSDDMQGRNEALNAIVKGKPIPRPGTPESFKVLMRELQSLGLDIAVYTDEGAEVDLMQDVNPRRSTPSRPTYESLGVADYDED.

The tract at residues 1073-1097 is disordered; the sequence is DVNPRRSTPSRPTYESLGVADYDED.

The protein belongs to the RNA polymerase beta chain family. In cyanobacteria the RNAP catalytic core is composed of 2 alpha, 1 beta, 1 beta', 1 gamma and 1 omega subunit. When a sigma factor is associated with the core the holoenzyme is formed, which can initiate transcription.

It carries out the reaction RNA(n) + a ribonucleoside 5'-triphosphate = RNA(n+1) + diphosphate. DNA-dependent RNA polymerase catalyzes the transcription of DNA into RNA using the four ribonucleoside triphosphates as substrates. The chain is DNA-directed RNA polymerase subunit beta from Synechococcus sp. (strain RCC307).